The primary structure comprises 240 residues: Adiponectin (240 aa).

The signal sequence occupies residues 1–17 (MLLQGALLLLLALPSHG). 5-hydroxylysine is present on K28. O-linked (Gal...) hydroxylysine glycosylation is present at K28. The disordered stretch occupies residues 29 to 100 (GACAGWMAGI…GTPGRKGEPG (72 aa)). C31 is subject to S-(2-succinyl)cysteine. 3 positions are modified to 4-hydroxyproline: P39, P42, and P48. The Collagen-like domain occupies 43 to 102 (GHNGTPGRDGRDGTPGEKGEKGDPGLVGPKGDTGETGITGIEGPRGFPGTPGRKGEPGES). Residues 50–65 (RDGRDGTPGEKGEKGD) show a composition bias toward basic and acidic residues. A 5-hydroxylysine mark is found at K60, K63, and K72. K60, K63, and K72 each carry an O-linked (Gal...) hydroxylysine glycan. P86 carries the post-translational modification 4-hydroxyproline. K96 is subject to 5-hydroxylysine. A glycan (O-linked (Gal...) hydroxylysine) is linked at K96. A C1q domain is found at 103-240 (AYVYRSAFSV…GFLLYHNIVE (138 aa)).

Homomultimer. Forms trimers, hexamers and 12- to 18-mers. The trimers (low molecular weight complexes / LMW) are assembled via non-covalent interactions of the collagen-like domains in a triple helix and hydrophobic interactions within the globular C1q domain. Several trimers can associate to form disulfide-linked hexamers (middle molecular weight complexes / MMW) and larger complexes (higher molecular weight / HMW). The HMW-complex assembly is also modulated by the degree of lysine hydroxylation and glycosylation. LMW, MMW and HMW complexes bind to HBEGF, MMW and HMW complexes bind to PDGFB, and HMW complex binds to FGF2. Interacts with CTRP9 via the C1q domain (heterotrimeric complex). In terms of processing, HMW complexes are more extensively glycosylated than smaller oligomers. Hydroxylation and glycosylation of the lysine residues within the collagen-like domain of adiponectin seem to be critically involved in regulating the formation and/or secretion of HMW complexes and consequently contribute to the insulin-sensitizing activity of adiponectin in hepatocytes. Post-translationally, O-glycosylated. O-linked glycans on hydroxylysine residues consist of Glc-Gal disaccharides bound to the oxygen atom of post-translationally added hydroxyl groups. O-linked glycosylations elsewhere disialylated with the structure Neu5Acalpha2-&gt;8Neu5Acalpha2-&gt;3Gal. Sialylated by alpha 2,8-sialyltransferase III. Desialylated forms are rapidly cleared from the circulation. Not N-glycosylated. Succination of Cys-31 by the Krebs cycle intermediate fumarate, which leads to S-(2-succinyl)cysteine residues, inhibits polymerization and secretion of adiponectin. Adiponectin is a major target for succination in both adipocytes and adipose tissue of diabetic mammals. It was proposed that succination of proteins is a biomarker of mitochondrial stress and accumulation of Krebs cycle intermediates in adipose tissue in diabetes and that succination of adiponectin may contribute to the decrease in plasma adiponectin in diabetes.

It localises to the secreted. Its activity is regulated as follows. Polymerization and secretion of adiponectin is inhibited by succination of cysteine residues by the Krebs cycle intermediate fumarate, which leads to S-(2-succinyl)cysteine residues. Functionally, important adipokine involved in the control of fat metabolism and insulin sensitivity, with direct anti-diabetic, anti-atherogenic and anti-inflammatory activities. Stimulates AMPK phosphorylation and activation in the liver and the skeletal muscle, enhancing glucose utilization and fatty-acid combustion. Antagonizes TNF-alpha by negatively regulating its expression in various tissues such as liver and macrophages, and also by counteracting its effects. Inhibits endothelial NF-kappa-B signaling through a cAMP-dependent pathway. May play a role in cell growth, angiogenesis and tissue remodeling by binding and sequestering various growth factors with distinct binding affinities, depending on the type of complex, LMW, MMW or HMW. This chain is Adiponectin (ADIPOQ), found in Bos taurus (Bovine).